The sequence spans 539 residues: MVADPPKGDPKGYAAAEPTANGVSMLVPIEDVGSLKGGRCGSGDQVRRCLRANLLVLLTVVAVVAGVALGLGVSGAGGAFALGPARLEAFSFPGELLLRLLKMIILPLVVCSLIGGAASLDPSALGRLGAWALLFFLVTTLLASALGVGLALALQPGAAFAAINTSVGAPVEEAPSKEVLDSFLDLVRNIFPSNLVSAAFRSYTTSYKERLFNGTLVKVPTGGEVEGMNILGLVVFAIIFGVALRKLGPEGELLIRFFNSFNDATMVLVSWIMWYAPVGILFLVAGKIVEMENVGLLFASLGKYILCCLLGHAIHGLLTLPLIYFLFARKNPYRFLWGIMTPLATAFGTSSSSATLPLMMKCVEEKNGVARHISRFILPIGATVNMDGAALFQCVAAVFIAQLNHRSLDFVKIITILVTATASSVGAAGIPSGGVLTLAIILEAVNLPVHDISLILAVDWLVDRSCTVLNVEGDAFGAGLLQSYLDRTENCNSVPELIQVKSEMPLAALPVPGEEGNPLLKGCPGPAGDADTCEKESVM.

The residue at position 1 (M1) is an N-acetylmethionine. Residues 1 to 52 (MVADPPKGDPKGYAAAEPTANGVSMLVPIEDVGSLKGGRCGSGDQVRRCLRA) lie on the Cytoplasmic side of the membrane. The helical transmembrane segment at 53 to 82 (NLLVLLTVVAVVAGVALGLGVSGAGGAFAL) threads the bilayer. Residues 83–95 (GPARLEAFSFPGE) are Extracellular-facing. Residues 96–117 (LLLRLLKMIILPLVVCSLIGGA) traverse the membrane as a helical segment. At 118–131 (ASLDPSALGRLGAW) the chain is on the cytoplasmic side. A helical membrane pass occupies residues 132 to 154 (ALLFFLVTTLLASALGVGLALAL). Over 155–223 (QPGAAFAAIN…GTLVKVPTGG (69 aa)) the chain is Extracellular. N-linked (GlcNAc...) asparagine glycans are attached at residues N164 and N213. The helical transmembrane segment at 224–247 (EVEGMNILGLVVFAIIFGVALRKL) threads the bilayer. The Cytoplasmic segment spans residues 248–256 (GPEGELLIR). Residues 257 to 284 (FFNSFNDATMVLVSWIMWYAPVGILFLV) form a helical membrane-spanning segment. The Extracellular segment spans residues 285–305 (AGKIVEMENVGLLFASLGKYI). A helical membrane pass occupies residues 306 to 327 (LCCLLGHAIHGLLTLPLIYFLF). The Cytoplasmic segment spans residues 328 to 332 (ARKNP). The segment at residues 333 to 363 (YRFLWGIMTPLATAFGTSSSSATLPLMMKCV) is an intramembrane region (discontinuously helical). Residues 364-372 (EEKNGVARH) are Cytoplasmic-facing. The chain crosses the membrane as a helical span at residues 373–399 (ISRFILPIGATVNMDGAALFQCVAAVF). Residues G381, T383, and N385 each contribute to the Na(+) site. The Extracellular portion of the chain corresponds to 400–412 (IAQLNHRSLDFVK). Residues 413–446 (IITILVTATASSVGAAGIPSGGVLTLAIILEAVN) constitute an intramembrane region (discontinuously helical). Residues 447–459 (LPVHDISLILAVD) lie on the Extracellular side of the membrane. The helical transmembrane segment at 460 to 481 (WLVDRSCTVLNVEGDAFGAGLL) threads the bilayer. 2 residues coordinate Na(+): N470 and D474. The Cytoplasmic segment spans residues 482–539 (QSYLDRTENCNSVPELIQVKSEMPLAALPVPGEEGNPLLKGCPGPAGDADTCEKESVM). S493, S502, and S537 each carry phosphoserine. The disordered stretch occupies residues 518–539 (PLLKGCPGPAGDADTCEKESVM).

The protein belongs to the dicarboxylate/amino acid:cation symporter (DAACS) (TC 2.A.23) family. SLC1A5 subfamily. Homotrimer.

The protein resides in the cell membrane. Its subcellular location is the melanosome. It catalyses the reaction L-glutamine(out) + L-serine(in) + Na(+)(out) = L-glutamine(in) + L-serine(out) + Na(+)(in). The catalysed reaction is L-glutamine(in) + L-serine(out) + Na(+)(out) = L-glutamine(out) + L-serine(in) + Na(+)(in). It carries out the reaction L-threonine(in) + L-glutamine(out) + Na(+)(out) = L-threonine(out) + L-glutamine(in) + Na(+)(in). The enzyme catalyses L-threonine(out) + L-glutamine(in) + Na(+)(out) = L-threonine(in) + L-glutamine(out) + Na(+)(in). It catalyses the reaction L-asparagine(in) + L-glutamine(out) + Na(+)(out) = L-asparagine(out) + L-glutamine(in) + Na(+)(in). The catalysed reaction is L-asparagine(out) + L-glutamine(in) + Na(+)(out) = L-asparagine(in) + L-glutamine(out) + Na(+)(in). It carries out the reaction L-glutamine(in) + L-alanine(out) + Na(+)(out) = L-glutamine(out) + L-alanine(in) + Na(+)(in). The enzyme catalyses L-valine(out) + L-glutamine(in) + Na(+)(out) = L-valine(in) + L-glutamine(out) + Na(+)(in). It catalyses the reaction L-glutamine(in) + L-methionine(out) + Na(+)(out) = L-glutamine(out) + L-methionine(in) + Na(+)(in). The catalysed reaction is L-glutamine(in) + L-glutamate(out) + Na(+)(out) + H(+)(out) = L-glutamine(out) + L-glutamate(in) + Na(+)(in) + H(+)(in). It carries out the reaction D-serine(in) + L-glutamine(out) + Na(+)(out) = D-serine(out) + L-glutamine(in) + Na(+)(in). The enzyme catalyses D-serine(in) + L-alanine(out) + Na(+)(out) = D-serine(out) + L-alanine(in) + Na(+)(in). It catalyses the reaction nitrate(in) = nitrate(out). The catalysed reaction is iodide(out) = iodide(in). It carries out the reaction thiocyanate(in) = thiocyanate(out). Functionally, sodium-coupled antiporter of neutral amino acids. In a tri-substrate transport cycle, exchanges neutral amino acids between the extracellular and intracellular compartments, coupled to the inward cotransport of at least one sodium ion. The preferred substrate is the essential amino acid L-glutamine, a precursor for biosynthesis of proteins, nucleotides and amine sugars as well as an alternative fuel for mitochondrial oxidative phosphorylation. Exchanges L-glutamine with other neutral amino acids such as L-serine, L-threonine and L-asparagine in a bidirectional way. Provides L-glutamine to proliferating stem and activated cells driving the metabolic switch toward cell differentiation. The transport cycle is usually pH-independent, with the exception of L-glutamate. Transports extracellular L-glutamate coupled to the cotransport of one proton and one sodium ion in exchange for intracellular L-glutamine counter-ion. May provide for L-glutamate uptake in glial cells regulating glutamine/glutamate cycle in the nervous system. Can transport D-amino acids. Mediates D-serine release from the retinal glia potentially affecting NMDA receptor function in retinal neurons. Displays sodium- and amino acid-dependent but uncoupled channel-like anion conductance with a preference SCN(-) &gt;&gt; NO3(-) &gt; I(-) &gt; Cl(-). Through binding of the fusogenic protein syncytin-1/ERVW-1 may mediate trophoblasts syncytialization, the spontaneous fusion of their plasma membranes, an essential process in placental development. The sequence is that of Neutral amino acid transporter B(0) (SLC1A5) from Bos taurus (Bovine).